The sequence spans 151 residues: Large ribosomal subunit protein uL15 (151 aa).

The interval 1–58 is disordered; the sequence is MELNQLKSVPKARNHKTKTLGRGHGSGLGKTSGRGQKGQKARKSGLTRPGFEGGQTPL. Residues 10 to 21 show a composition bias toward basic residues; it reads PKARNHKTKTLG. The span at 22-36 shows a compositional bias: gly residues; sequence RGHGSGLGKTSGRGQ.

It belongs to the universal ribosomal protein uL15 family. Part of the 50S ribosomal subunit.

Functionally, binds to the 23S rRNA. The chain is Large ribosomal subunit protein uL15 from Mycoplasma pneumoniae (strain ATCC 29342 / M129 / Subtype 1) (Mycoplasmoides pneumoniae).